We begin with the raw amino-acid sequence, 112 residues long: Tetracenomycin-F1 monooxygenase (112 aa).

Positions 11 to 100 (FTLVNVFGVA…SRPKPIFCEV (90 aa)) constitute an ABM domain.

As to quaternary structure, homotrimer.

It catalyses the reaction tetracenomycin F1 + O2 = tetracenomycin D3 + H2O + H(+). Its pathway is antibiotic biosynthesis; tetracenomycin C biosynthesis. Inhibited by p-chloromercuribenzoic acid, N-ethylmaleimide and diethyl pyrocarbonate. Oxygenase required for conversion of tetracenomycin F1 to tetracenomycin D3. The protein is Tetracenomycin-F1 monooxygenase (tcmH) of Streptomyces glaucescens.